The following is a 217-amino-acid chain: tRNA (guanine-N(7)-)-methyltransferase (217 aa).

S-adenosyl-L-methionine-binding residues include Glu56, Glu81, Asp108, and Asp130. Asp130 is a catalytic residue. Substrate is bound by residues Lys134 and Asp166.

It belongs to the class I-like SAM-binding methyltransferase superfamily. TrmB family.

It carries out the reaction guanosine(46) in tRNA + S-adenosyl-L-methionine = N(7)-methylguanosine(46) in tRNA + S-adenosyl-L-homocysteine. It functions in the pathway tRNA modification; N(7)-methylguanine-tRNA biosynthesis. Functionally, catalyzes the formation of N(7)-methylguanine at position 46 (m7G46) in tRNA. In Neorickettsia sennetsu (strain ATCC VR-367 / Miyayama) (Ehrlichia sennetsu), this protein is tRNA (guanine-N(7)-)-methyltransferase.